The primary structure comprises 1400 residues: Bromodomain-containing protein 4 (1400 aa).

The tract at residues 1 to 58 (MSTESGPGTRLRNLPVMGDGLETSQMSTTQAQAQPQPANAASTNPPPPETSNPNKPKR) is disordered. Over residues 23-43 (TSQMSTTQAQAQPQPANAAST) the composition is skewed to low complexity. The Bromo 1 domain maps to 58 to 164 (RQTNQLQYLL…KLFLQKINEL (107 aa)). Lysine 99 participates in a covalent cross-link: Glycyl lysine isopeptide (Lys-Gly) (interchain with G-Cter in SUMO2). Disordered stretches follow at residues 176–353 (AKGR…KISE) and 461–616 (EPEE…YEEK). Over residues 197–212 (PNTTQASTSPQTQTPQ) the composition is skewed to low complexity. Residues 244 to 267 (PPQPLQTPSPVPPQPPPPPAPVPQ) are compositionally biased toward pro residues. Residues 321 to 337 (PRRESSRPVKPPKKDVP) are compositionally biased toward basic and acidic residues. Positions 349–458 (SKISEQLKCC…DVFEMRFAKM (110 aa)) constitute a Bromo 2 domain. A Phosphoserine modification is found at serine 471. Over residues 479–498 (KVVAPPSSSDSSSDSSSDSD) the composition is skewed to low complexity. Serine 485, serine 489, and serine 493 each carry phosphoserine; by CK2. An NPS region region spans residues 485 to 504 (SSSDSSSDSSSDSDSSTDDS). Serine 495 bears the Phosphoserine mark. Residues serine 499, serine 500, and serine 504 each carry the phosphoserine; by CK2 modification. The BID region stretch occupies residues 525-580 (QLAALSQPQQNKPKKKEKDKKEKKKEKHKKKEEVEENKKSKTKELPPKKTKKNNSS). Positions 536–554 (KPKKKEKDKKEKKKEKHKK) are enriched in basic residues. Over residues 555–571 (KEEVEENKKSKTKELPP) the composition is skewed to basic and acidic residues. A Glycyl lysine isopeptide (Lys-Gly) (interchain with G-Cter in SUMO2) cross-link involves residue lysine 586. The NET domain maps to 601 to 683 (ESEEEDKCKP…SCLRKKRKPQ (83 aa)). Serine 602 is modified (phosphoserine). Positions 606–616 (DKCKPMSYEEK) are enriched in basic and acidic residues. Glycyl lysine isopeptide (Lys-Gly) (interchain with G-Cter in SUMO2) cross-links involve residues lysine 646 and lysine 695. The segment at 675–1125 (CLRKKRKPQA…GCPPASPAAV (451 aa)) is disordered. A compositionally biased stretch (low complexity) spans 700-713 (SSSESESTSESSSS). Residues 725–745 (KSKKKGHTGRDQKKHHHHHHP) show a composition bias toward basic residues. Pro residues-rich tracts occupy residues 748–787 (QPAPAPVPQQPPPPPQQPPPPPPPQQQQQQPPPPPPPPSM), 835–848 (PELPPHLPQPPEHS), 883–892 (PPKPTRPPAV), and 900–909 (PLLPQPPMAQ). Residues 928-938 (MQMQLYLQQLQ) show a composition bias toward low complexity. Pro residues-rich tracts occupy residues 955 to 966 (QPPPPLPPPPHP), 975 to 1000 (PQPPPPPPPQPQPPPQQQHQPPPRPV), and 1013 to 1037 (QPPPPPGQQPTHPPPGQQPPPPQPA). The interval 1050-1400 (RHHKSDPYSA…LLSIFEENLF (351 aa)) is C-terminal (CTD) region. Lysine 1053 participates in a covalent cross-link: Glycyl lysine isopeptide (Lys-Gly) (interchain with G-Cter in SUMO2). Polar residues predominate over residues 1075 to 1084 (QMPQFQSLTH). Over residues 1085–1095 (QSPPQQNVQPK) the composition is skewed to low complexity. Lysine 1147 is modified (N6-acetyllysine; alternate). Residue lysine 1147 forms a Glycyl lysine isopeptide (Lys-Gly) (interchain with G-Cter in SUMO1); alternate linkage. A Glycyl lysine isopeptide (Lys-Gly) (interchain with G-Cter in SUMO2); alternate cross-link involves residue lysine 1147. Residues serine 1153 and serine 1162 each carry the phosphoserine modification. The disordered stretch occupies residues 1155 to 1377 (IIRSEPFSTS…KREQERRRRE (223 aa)). Positions 1211 to 1232 (PDKDKQKQEPKTPVAPKKDLKI) are enriched in basic and acidic residues. A Glycyl lysine isopeptide (Lys-Gly) (interchain with G-Cter in SUMO2) cross-link involves residue lysine 1233. Residues serine 1237 and serine 1240 each carry the phosphoserine modification. A compositionally biased stretch (low complexity) spans 1247-1258 (TTPSSTAKSSSD). A compositionally biased stretch (basic and acidic residues) spans 1259 to 1320 (SFEHFRRAAR…AHEEARRRQE (62 aa)). Over residues 1321-1357 (QQQQQQQQRQEQQQQQQQAAAVAAASAPQAQSSQPQS) the composition is skewed to low complexity. The span at 1361-1377 (QQRELARKREQERRRRE) shows a compositional bias: basic and acidic residues.

Belongs to the BET family. As to quaternary structure, binds acetylated histone H4. Interacts with p53/TP53; the interaction is direct. Interacts (via CTD region) with CDK9 and CCNT1, acting as an associated component of P-TEFb complex. Interacts with RELA (when acetylated at 'Lys-310'). Interacts (via NET domain) with NSD3, CHD4, BICRA and ATAD5. The interaction with BICRA bridges BRD4 to the GBAF complex. Interacts (via NET domain) with JMJD6 (via JmjC and N-terminal domains); the interaction is stronger in presence of ssRNA and recruits JMJD6 on distal enhancers. Interacts with NSD3. Interacts with NIPBL. Post-translationally, phosphorylation by CK2 disrupt the intramolecular binding between the bromo domain 2 and the NPS region and promotes binding between the NPS and the BID regions, leading to activate the protein and promote binding to acetylated histones. In absence of phosphorylation, BRD4 does not localize to p53/TP53 target gene promoters, phosphorylation promoting recruitment to p53/TP53 target promoters.

The protein resides in the nucleus. Its subcellular location is the chromosome. Chromatin reader protein that recognizes and binds acetylated histones and plays a key role in transmission of epigenetic memory across cell divisions and transcription regulation. Remains associated with acetylated chromatin throughout the entire cell cycle and provides epigenetic memory for postmitotic G1 gene transcription by preserving acetylated chromatin status and maintaining high-order chromatin structure. During interphase, plays a key role in regulating the transcription of signal-inducible genes by associating with the P-TEFb complex and recruiting it to promoters. Also recruits P-TEFb complex to distal enhancers, so called anti-pause enhancers in collaboration with JMJD6. BRD4 and JMJD6 are required to form the transcriptionally active P-TEFb complex by displacing negative regulators such as HEXIM1 and 7SKsnRNA complex from P-TEFb, thereby transforming it into an active form that can then phosphorylate the C-terminal domain (CTD) of RNA polymerase II. Regulates differentiation of naive CD4(+) T-cells into T-helper Th17 by promoting recruitment of P-TEFb to promoters. Promotes phosphorylation of 'Ser-2' of the C-terminal domain (CTD) of RNA polymerase II. According to a report, directly acts as an atypical protein kinase and mediates phosphorylation of 'Ser-2' of the C-terminal domain (CTD) of RNA polymerase II; these data however need additional evidences in vivo. In addition to acetylated histones, also recognizes and binds acetylated RELA, leading to further recruitment of the P-TEFb complex and subsequent activation of NF-kappa-B. Also acts as a regulator of p53/TP53-mediated transcription: following phosphorylation by CK2, recruited to p53/TP53 specific target promoters. This chain is Bromodomain-containing protein 4 (Brd4), found in Mus musculus (Mouse).